The sequence spans 262 residues: Acyl-[acyl-carrier-protein]--UDP-N-acetylglucosamine O-acyltransferase (262 aa).

It belongs to the transferase hexapeptide repeat family. LpxA subfamily. In terms of assembly, homotrimer.

Its subcellular location is the cytoplasm. It carries out the reaction a (3R)-hydroxyacyl-[ACP] + UDP-N-acetyl-alpha-D-glucosamine = a UDP-3-O-[(3R)-3-hydroxyacyl]-N-acetyl-alpha-D-glucosamine + holo-[ACP]. Its pathway is glycolipid biosynthesis; lipid IV(A) biosynthesis; lipid IV(A) from (3R)-3-hydroxytetradecanoyl-[acyl-carrier-protein] and UDP-N-acetyl-alpha-D-glucosamine: step 1/6. Involved in the biosynthesis of lipid A, a phosphorylated glycolipid that anchors the lipopolysaccharide to the outer membrane of the cell. This chain is Acyl-[acyl-carrier-protein]--UDP-N-acetylglucosamine O-acyltransferase, found in Vibrio campbellii (strain ATCC BAA-1116).